Here is a 177-residue protein sequence, read N- to C-terminus: Protein SOB FIVE-LIKE 6 (177 aa).

An SOFL-A motif is present at residues 14–19; the sequence is SGWTMY. 2 disordered regions span residues 37–60 and 78–104; these read ETKQ…PYYC and KSKS…FNSS. The short motif at 47 to 56 is the SOFL-B element; it reads SMVSDASSGP. The segment covering 79–90 has biased composition (basic residues); that stretch reads SKSKNKNKNKKK.

This sequence belongs to the SOFL plant protein family. Expressed in seedlings, flowers and siliques. Barely detectable in roots and leaves.

Its subcellular location is the cytoplasm. The protein resides in the nucleus. Its function is as follows. Involved in cytokinin-mediated development. The chain is Protein SOB FIVE-LIKE 6 from Arabidopsis thaliana (Mouse-ear cress).